We begin with the raw amino-acid sequence, 675 residues long: Heat shock 70 kDa protein, mitochondrial (675 aa).

The N-terminal 51 residues, 1–51 (MAAVLRSLRRRDVASATFSAYRSLTGSTKPAYVAQKWSCLARPFSSRPAGN), are a transit peptide targeting the mitochondrion. The tract at residues 638–675 (VSKIGEHMSGGSSGGSSAGGSQGGGDQAPEAEYEEVKK) is disordered. Gly residues predominate over residues 648 to 663 (GSSGGSSAGGSQGGGD). The segment covering 666–675 (PEAEYEEVKK) has biased composition (acidic residues).

Belongs to the heat shock protein 70 family.

It is found in the mitochondrion. This is Heat shock 70 kDa protein, mitochondrial from Phaseolus vulgaris (Kidney bean).